The primary structure comprises 80 residues: RNA-binding protein Hfq (80 aa).

The 60-residue stretch at Asp10–Val69 folds into the Sm domain.

This sequence belongs to the Hfq family. As to quaternary structure, homohexamer.

RNA chaperone that binds small regulatory RNA (sRNAs) and mRNAs to facilitate mRNA translational regulation in response to envelope stress, environmental stress and changes in metabolite concentrations. Also binds with high specificity to tRNAs. The sequence is that of RNA-binding protein Hfq from Nitrosomonas eutropha (strain DSM 101675 / C91 / Nm57).